Consider the following 255-residue polypeptide: Complement C1q-like protein 3 (255 aa).

A signal peptide spans 1–20; the sequence is MVLLLVILIPVLVSSAGTSA. A disordered region spans residues 39–109; sequence KAPSTAATPD…GLPGPPGAPG (71 aa). The region spanning 61–111 is the Collagen-like domain; the sequence is GPKGEAGRPGKAGPRGPPGEPGPPGPVGPPGEKGEPGRQGLPGPPGAPGLN. Residues 75–89 show a composition bias toward pro residues; that stretch reads RGPPGEPGPPGPVGP. The C1q domain occupies 122 to 255; sequence STVPKIAFYA…TFSGFIIYAD (134 aa).

Forms homooligomers. Interacts with ADGRB3. Forms heterooligomers with C1QL2 and C1QL4, when proteins are coexpressed; this interaction does not occur after secretion. Highly expressed in brain and white adipose tissue. In gonadal fat pad, expressed at lower levels in adipocytes than in the stromal vascular fraction (VSP), which contains preadipocytes, fibroblasts, endothelial cells and occasional immune cells. Expression exhibits sexually dimorphism, with higher levels in females than in males (at protein level). Tends to be up-regulated in adipose tissue from obese males, but not females. Expressed in glial cells.

It localises to the secreted. Its function is as follows. May regulate the number of excitatory synapses that are formed on hippocampus neurons. Has no effect on inhibitory synapses. Plays a role in glucose homeostasis. Via AMPK signaling pathway, stimulates glucose uptake in adipocytes, myotubes and hepatocytes and enhances insulin-stimulated glucose uptake. In a hepatoma cell line, reduces the expression of gluconeogenic enzymes G6PC1 and PCK1 and hence decreases de novo glucose production. This is Complement C1q-like protein 3 (C1ql3) from Mus musculus (Mouse).